We begin with the raw amino-acid sequence, 97 residues long: Citrate lyase acyl carrier protein (97 aa).

At S14 the chain carries O-(phosphoribosyl dephospho-coenzyme A)serine.

Belongs to the CitD family. Oligomer with a subunit composition of (alpha,beta,gamma)6.

The protein resides in the cytoplasm. Its function is as follows. Covalent carrier of the coenzyme of citrate lyase. This Rhodopseudomonas palustris (strain BisA53) protein is Citrate lyase acyl carrier protein.